We begin with the raw amino-acid sequence, 208 residues long: Na(+)-translocating NADH-quinone reductase subunit D (208 aa).

5 helical membrane-spanning segments follow: residues 42–62, 72–92, 103–123, 131–151, and 178–198; these read IVMG…ISLV, IIVQ…LLQA, VFVG…AFAM, LIDG…VATV, and NGLF…IWGL.

The protein belongs to the NqrDE/RnfAE family. As to quaternary structure, composed of six subunits; NqrA, NqrB, NqrC, NqrD, NqrE and NqrF.

The protein localises to the cell inner membrane. It carries out the reaction a ubiquinone + n Na(+)(in) + NADH + H(+) = a ubiquinol + n Na(+)(out) + NAD(+). Functionally, NQR complex catalyzes the reduction of ubiquinone-1 to ubiquinol by two successive reactions, coupled with the transport of Na(+) ions from the cytoplasm to the periplasm. NqrA to NqrE are probably involved in the second step, the conversion of ubisemiquinone to ubiquinol. The chain is Na(+)-translocating NADH-quinone reductase subunit D from Neisseria meningitidis serogroup B (strain ATCC BAA-335 / MC58).